Here is a 224-residue protein sequence, read N- to C-terminus: Endonuclease NucS (224 aa).

It belongs to the NucS endonuclease family.

It is found in the cytoplasm. Functionally, cleaves both 3' and 5' ssDNA extremities of branched DNA structures. This Rhodococcus jostii (strain RHA1) protein is Endonuclease NucS.